We begin with the raw amino-acid sequence, 106 residues long: Thiosulfate sulfurtransferase GlpE (106 aa).

The region spanning 17 to 105 is the Rhodanese domain; the sequence is SRGEARLVDI…WHRASLPVEA (89 aa). Residue Cys-65 is the Cysteine persulfide intermediate of the active site.

This sequence belongs to the GlpE family.

The protein resides in the cytoplasm. The catalysed reaction is thiosulfate + hydrogen cyanide = thiocyanate + sulfite + 2 H(+). It catalyses the reaction thiosulfate + [thioredoxin]-dithiol = [thioredoxin]-disulfide + hydrogen sulfide + sulfite + 2 H(+). Its function is as follows. Transferase that catalyzes the transfer of sulfur from thiosulfate to thiophilic acceptors such as cyanide or dithiols. May function in a CysM-independent thiosulfate assimilation pathway by catalyzing the conversion of thiosulfate to sulfite, which can then be used for L-cysteine biosynthesis. The polypeptide is Thiosulfate sulfurtransferase GlpE (Vibrio vulnificus (strain CMCP6)).